The following is a 225-amino-acid chain: Phosphoglycolate phosphatase (225 aa).

The active-site Nucleophile is D11. Mg(2+) contacts are provided by D11 and D13. Position 153 (K153) interacts with substrate. Mg(2+)-binding residues include D176 and D180.

Belongs to the archaeal SPP-like hydrolase family. Mg(2+) serves as cofactor.

It catalyses the reaction 2-phosphoglycolate + H2O = glycolate + phosphate. Functionally, catalyzes the dephosphorylation of 2-phosphoglycolate. This chain is Phosphoglycolate phosphatase, found in Halobacterium salinarum (strain ATCC 29341 / DSM 671 / R1).